Here is a 322-residue protein sequence, read N- to C-terminus: Protein mono-ADP-ribosyltransferase PARP16 (322 aa).

Residues 1-287 (MQLSNRAAAR…RASSQLSWLS (287 aa)) lie on the Cytoplasmic side of the membrane. The PARP alpha-helical domain maps to 5-91 (NRAAAREAAS…AWDLVSWILS (87 aa)). The PARP catalytic domain maps to 94–279 (ILTIHSAKKA…VYSQKQPKRA (186 aa)). NAD(+) contacts are provided by His-152, Tyr-182, and Tyr-254. A helical transmembrane segment spans residues 288-308 (SHWFVIMMSLYLLLLLIVSVT). Residues 309-322 (NSSVFHHFWNRVKR) are Lumenal-facing.

Belongs to the ARTD/PARP family. As to quaternary structure, interacts with KPNB1. Auto-mono-ADP-ribosylated.

The protein resides in the endoplasmic reticulum membrane. The enzyme catalyses L-aspartyl-[protein] + NAD(+) = 4-O-(ADP-D-ribosyl)-L-aspartyl-[protein] + nicotinamide. It catalyses the reaction L-lysyl-[protein] + NAD(+) = N(6)-(ADP-D-ribosyl)-L-lysyl-[protein] + nicotinamide + H(+). The catalysed reaction is L-glutamyl-[protein] + NAD(+) = 5-O-(ADP-D-ribosyl)-L-glutamyl-[protein] + nicotinamide. With respect to regulation, in absence of activation signal, PARP16 is autoinhibited by the PARP alpha-helical domain (also named HD region), which prevents effective NAD(+)-binding. Activity is highly stimulated by signals, which unfold the PARP alpha-helical domain, relieving autoinhibition. Functionally, intracellular mono-ADP-ribosyltransferase that plays a role in different processes, such as protein translation and unfolded protein response (UPR), through the mono-ADP-ribosylation of proteins involved in those processes. Acts as an inhibitor of protein translation by catalyzing mono-ADP-ribosylation of ribosomal subunits, such as RPL14 and RPS6, thereby inhibiting polysome assembly and mRNA loading. Mono-ADP-ribosylation of ribosomal subunits is promoted by NMNAT2. Involved in the unfolded protein response (UPR) by ADP-ribosylating and activating EIF2AK3 and ERN1, two important UPR effectors. May also mediate mono-ADP-ribosylation of karyopherin KPNB1 a nuclear import factor. May not modify proteins on arginine or cysteine residues compared to other mono-ADP-ribosyltransferases. The sequence is that of Protein mono-ADP-ribosyltransferase PARP16 from Mus musculus (Mouse).